The chain runs to 285 residues: Golgi phosphoprotein 3-like (285 aa).

The interval 1 to 39 (MTTLTHRARRTEVGKNSEKKVESEENVNQDRNQDNEDIG) is disordered. Over residues 10–23 (RTEVGKNSEKKVES) the composition is skewed to basic and acidic residues. 2 residues coordinate a 1,2-diacyl-sn-glycero-3-phospho-(1D-myo-inositol 4-phosphate): tryptophan 67 and arginine 76. Serine 112 bears the Phosphoserine mark. A 1,2-diacyl-sn-glycero-3-phospho-(1D-myo-inositol 4-phosphate) contacts are provided by arginine 157 and arginine 160. A beta-hairpin required for oligomerization region spans residues 176 to 187 (EKQNFLLFDMTT).

Belongs to the GOLPH3/VPS74 family. Homooligomer. Does not interact MYO18; differs from GOLPH3 by its inability to interact with MYO18. May interact with ARF1.

Its subcellular location is the golgi apparatus. It is found in the golgi stack membrane. It localises to the trans-Golgi network membrane. In terms of biological role, phosphatidylinositol-4-phosphate-binding protein that may antagonize the action of GOLPH3 which is required for the process of vesicle budding at the Golgi and anterograde transport to the plasma membrane. In Bos taurus (Bovine), this protein is Golgi phosphoprotein 3-like (GOLPH3L).